A 367-amino-acid chain; its full sequence is 2-aminoethylphosphonate--pyruvate transaminase (367 aa).

K194 carries the N6-(pyridoxal phosphate)lysine modification.

It belongs to the class-V pyridoxal-phosphate-dependent aminotransferase family. PhnW subfamily. In terms of assembly, homodimer. It depends on pyridoxal 5'-phosphate as a cofactor.

The enzyme catalyses (2-aminoethyl)phosphonate + pyruvate = phosphonoacetaldehyde + L-alanine. In terms of biological role, involved in phosphonate degradation. This is 2-aminoethylphosphonate--pyruvate transaminase from Salmonella heidelberg (strain SL476).